Consider the following 5381-residue polypeptide: Protein purity of essence (5381 aa).

Disordered stretches follow at residues 140 to 174 (KHPESSNKSIMSMAGSTTGGAGAGGSNDKESPKLE), 339 to 364 (QQQTAAAASTSQGSGGGLSSVQTSKD), 599 to 621 (SPETHDDNANTSSQERSGEQKSA), 683 to 709 (RNDSEQQSPPSTAAAVAAATGAGSSGS), 1162 to 1212 (SGGD…STET), and 1632 to 1659 (QAAQPNPSEESSQACDHSEGGEQRQSER). The segment covering 339–350 (QQQTAAAASTSQ) has biased composition (low complexity). Low complexity-rich tracts occupy residues 690 to 709 (SPPSTAAAVAAATGAGSSGS) and 1167 to 1176 (SSCTSAASSS). Residues 1632 to 1646 (QAAQPNPSEESSQAC) show a composition bias toward polar residues. Over residues 1647–1658 (DHSEGGEQRQSE) the composition is skewed to basic and acidic residues. A UBR-type zinc finger spans residues 1815–1884 (KLCTFSQTQK…EDGSCQALSR (70 aa)). 6 disordered regions span residues 1917-1939 (KRSNTAPGATQQQHGAPARKDSI), 2443-2479 (KNTTNNPQGKSKGGGSAAAGKLLHRKASSQQHQKQLT), 2632-2652 (PDDSEDVPAPSSGPTPVTATQ), 3037-3143 (VSAG…DNNE), 3537-3562 (KQQQQQQQPPPAVVSASSKLRSDREK), and 4247-4280 (HHQQDAPAGTKPKSSKQQQSAGTETPPRKSKEAA). Composition is skewed to polar residues over residues 1920-1930 (NTAPGATQQQH), 2470-2479 (SSQQHQKQLT), 2643-2652 (SGPTPVTATQ), and 3048-3058 (NVATDGSTLRT). The segment covering 3065–3075 (GSGGSESGGSG) has biased composition (gly residues). Residues 3084-3104 (ARSSNFGDHPNTTPPRQSCSS) show a composition bias toward polar residues. Positions 3119–3132 (SGSGGSASVPGGGL) are enriched in gly residues. The tract at residues 4904-5374 (PSLKYILRFL…SFIEDLLASL (471 aa)) is UBR4 E3 catalytic module. The HemiRING-type zinc-finger motif lies at 5022 to 5136 (GLTCFICREG…SSYMQESTQR (115 aa)). Zn(2+) is bound by residues cysteine 5025, cysteine 5028, histidine 5074, and cysteine 5077. Residues 5139–5374 (ISYTSSIHDL…SFIEDLLASL (236 aa)) enclose the UZI domain.

This sequence belongs to the UBR4 family.

Has a role in growth of the perineurial glial layer of the larval peripheral nerve. May have a role in male fertility and eye development or function. May bind calmodulin. The polypeptide is Protein purity of essence (Drosophila pseudoobscura pseudoobscura (Fruit fly)).